We begin with the raw amino-acid sequence, 280 residues long: Cycloeucalenol cycloisomerase (280 aa).

Helical transmembrane passes span 22-42, 53-73, 89-109, 167-187, 201-221, and 244-264; these read LFFL…VVPY, YLLL…LLVG, ANLW…HYFF, FEAA…TIAI, MYRV…PMFF, and AMLV…IVPL.

The protein localises to the membrane. It carries out the reaction cycloeucalenol = obtusifoliol. Converts pentacyclic cyclopropyl sterols to tetracyclic sterols. This is Cycloeucalenol cycloisomerase (CPI1) from Arabidopsis thaliana (Mouse-ear cress).